The primary structure comprises 357 residues: Alanine racemase (357 aa).

The active-site Proton acceptor; specific for D-alanine is the Lys33. Lys33 carries the post-translational modification N6-(pyridoxal phosphate)lysine. Arg129 is a binding site for substrate. Tyr253 (proton acceptor; specific for L-alanine) is an active-site residue. Residue Met301 coordinates substrate.

It belongs to the alanine racemase family. Pyridoxal 5'-phosphate is required as a cofactor.

The enzyme catalyses L-alanine = D-alanine. The protein operates within amino-acid biosynthesis; D-alanine biosynthesis; D-alanine from L-alanine: step 1/1. Its function is as follows. Catalyzes the interconversion of L-alanine and D-alanine. May also act on other amino acids. The polypeptide is Alanine racemase (alr) (Pseudomonas savastanoi pv. phaseolicola (strain 1448A / Race 6) (Pseudomonas syringae pv. phaseolicola (strain 1448A / Race 6))).